The primary structure comprises 487 residues: Probable glutamate receptor (487 aa).

Residues 1-23 (MDKGLHFIFCVVTAVLLLRESSQ) form the signal peptide. Residues 24 to 169 (TGAMRNDDAM…FFHFLAPFSK (146 aa)) are Extracellular-facing. Residue asparagine 104 is glycosylated (N-linked (GlcNAc...) asparagine). A helical membrane pass occupies residues 170 to 190 (ETWTGLLFAYVLTCVCLFLVA). Topologically, residues 191 to 235 (RLSPCEWNEPKNEENHFTFLNSLWFGAGALTLQGVTPRPKAFSVR) are cytoplasmic. Residues 236–256 (VIAAIWWLFTIALLAAYIANF) form a helical membrane-spanning segment. The Extracellular segment spans residues 257 to 419 (TALLSSGSEQ…EGWSPLQPQA (163 aa)). Residues 420-440 (LGGLFLTLAIGLALGVIAAMV) traverse the membrane as a helical segment. Over 441 to 487 (ELSNKSRHAAGHIKKSCCSIFTEEMCTRLRIKENTRQTQETSGRANA) the chain is Cytoplasmic.

This sequence belongs to the glutamate-gated ion channel (TC 1.A.10.1) family.

It localises to the cell membrane. The protein localises to the postsynaptic cell membrane. Receptor for glutamate. L-glutamate acts as an excitatory neurotransmitter at many synapses in the central nervous system. The postsynaptic actions of Glu are mediated by a variety of receptors that are named according to their selective agonists. The protein is Probable glutamate receptor (KBP) of Gallus gallus (Chicken).